We begin with the raw amino-acid sequence, 474 residues long: Trehalose-6-phosphate synthase (474 aa).

R10 is a binding site for D-glucose 6-phosphate. 22–23 (GG) is a UDP-alpha-D-glucose binding site. Positions 77 and 131 each coordinate D-glucose 6-phosphate. UDP-alpha-D-glucose-binding residues include R263 and K268. R301 is a binding site for D-glucose 6-phosphate. Residues F340 and 366–370 (LVAKE) each bind UDP-alpha-D-glucose.

It belongs to the glycosyltransferase 20 family. Homotetramer.

It catalyses the reaction D-glucose 6-phosphate + UDP-alpha-D-glucose = alpha,alpha-trehalose 6-phosphate + UDP + H(+). It functions in the pathway glycan biosynthesis; trehalose biosynthesis. Its function is as follows. Probably involved in the osmoprotection via the biosynthesis of trehalose. Catalyzes the transfer of glucose from UDP-alpha-D-glucose (UDP-Glc) to D-glucose 6-phosphate (Glc-6-P) to form trehalose-6-phosphate. Acts with retention of the anomeric configuration of the UDP-sugar donor. This Klebsiella pneumoniae subsp. pneumoniae (strain ATCC 700721 / MGH 78578) protein is Trehalose-6-phosphate synthase.